Here is a 111-residue protein sequence, read N- to C-terminus: C-X-C motif chemokine 14 (111 aa).

The first 34 residues, 1-34, serve as a signal peptide directing secretion; sequence MSLLPRRAPPVSMRLLAAALLLLLLALYTARVDG. Disulfide bonds link Cys37/Cys63 and Cys39/Cys84. The D-box signature appears at 67–81; sequence MVIITTKSVSRYRGQ.

This sequence belongs to the intercrine alpha (chemokine CxC) family. In terms of processing, ubiquitinated, followed by degradation by the proteasome. As to expression, expressed in heart, brain, placenta, lung, liver, skeletal muscle, kidney and pancreas. Highly expressed in normal tissue without inflammatory stimuli and infrequently expressed in cancer cell lines. Weakly expressed in monocyte-derived dendritic cells. Not detected in lung or unstimulated peripheral blood lymphocytes.

The protein localises to the secreted. Its function is as follows. Potent chemoattractant for neutrophils, and weaker for dendritic cells. Not chemotactic for T-cells, B-cells, monocytes, natural killer cells or granulocytes. Does not inhibit proliferation of myeloid progenitors in colony formation assays. In Homo sapiens (Human), this protein is C-X-C motif chemokine 14 (CXCL14).